A 216-amino-acid polypeptide reads, in one-letter code: Pyrophosphatase PpaX (216 aa).

Asp-9 functions as the Nucleophile in the catalytic mechanism.

This sequence belongs to the HAD-like hydrolase superfamily. PpaX family. Requires Mg(2+) as cofactor.

It carries out the reaction diphosphate + H2O = 2 phosphate + H(+). Hydrolyzes pyrophosphate formed during P-Ser-HPr dephosphorylation by HPrK/P. Might play a role in controlling the intracellular pyrophosphate pool. The sequence is that of Pyrophosphatase PpaX from Bacillus cereus (strain AH820).